The primary structure comprises 79 residues: Acyl carrier protein (79 aa).

Residues 4 to 79 (EQILVDVQEA…DVVAYIETKL (76 aa)) enclose the Carrier domain. Serine 39 is modified (O-(pantetheine 4'-phosphoryl)serine).

This sequence belongs to the acyl carrier protein (ACP) family. In terms of processing, 4'-phosphopantetheine is transferred from CoA to a specific serine of apo-ACP by AcpS. This modification is essential for activity because fatty acids are bound in thioester linkage to the sulfhydryl of the prosthetic group.

It localises to the cytoplasm. The protein operates within lipid metabolism; fatty acid biosynthesis. Its function is as follows. Carrier of the growing fatty acid chain in fatty acid biosynthesis. The chain is Acyl carrier protein from Exiguobacterium sp. (strain ATCC BAA-1283 / AT1b).